The chain runs to 159 residues: NADH-quinone oxidoreductase subunit B (159 aa).

Cys37, Cys38, Cys102, and Cys132 together coordinate [4Fe-4S] cluster.

Belongs to the complex I 20 kDa subunit family. NDH-1 is composed of 14 different subunits. Subunits NuoB, C, D, E, F, and G constitute the peripheral sector of the complex. The cofactor is [4Fe-4S] cluster.

The protein localises to the cell inner membrane. It carries out the reaction a quinone + NADH + 5 H(+)(in) = a quinol + NAD(+) + 4 H(+)(out). Functionally, NDH-1 shuttles electrons from NADH, via FMN and iron-sulfur (Fe-S) centers, to quinones in the respiratory chain. Couples the redox reaction to proton translocation (for every two electrons transferred, four hydrogen ions are translocated across the cytoplasmic membrane), and thus conserves the redox energy in a proton gradient. The sequence is that of NADH-quinone oxidoreductase subunit B from Ruthia magnifica subsp. Calyptogena magnifica.